The sequence spans 299 residues: Protease HtpX homolog (299 aa).

Transmembrane regions (helical) follow at residues 19–39 and 41–61; these read LFIV…VWYF and WGLT…WIAY. His-146 contributes to the Zn(2+) binding site. Residue Glu-147 is part of the active site. His-150 is a Zn(2+) binding site. 2 helical membrane passes run 156 to 176 and 198 to 218; these read ILLM…RDVM and IILL…VLII. Glu-227 serves as a coordination point for Zn(2+).

The protein belongs to the peptidase M48B family. Zn(2+) is required as a cofactor.

The protein localises to the cell membrane. This chain is Protease HtpX homolog, found in Thermoanaerobacter pseudethanolicus (strain ATCC 33223 / 39E) (Clostridium thermohydrosulfuricum).